Reading from the N-terminus, the 78-residue chain is Large ribosomal subunit protein bL28B (78 aa).

A disordered region spans residues 1 to 29 (MSAHCQVTGRKPGFGNTVSHSHRRSRRRW). Residues 20–29 (HSHRRSRRRW) show a composition bias toward basic residues.

It belongs to the bacterial ribosomal protein bL28 family.

This is Large ribosomal subunit protein bL28B (rpmB2) from Mycobacterium bovis (strain ATCC BAA-935 / AF2122/97).